The following is a 466-amino-acid chain: Asparagine--tRNA ligase (466 aa).

The protein belongs to the class-II aminoacyl-tRNA synthetase family. As to quaternary structure, homodimer.

It localises to the cytoplasm. The enzyme catalyses tRNA(Asn) + L-asparagine + ATP = L-asparaginyl-tRNA(Asn) + AMP + diphosphate + H(+). The sequence is that of Asparagine--tRNA ligase from Pectobacterium atrosepticum (strain SCRI 1043 / ATCC BAA-672) (Erwinia carotovora subsp. atroseptica).